We begin with the raw amino-acid sequence, 239 residues long: ATP synthase subunit a (239 aa).

A run of 5 helical transmembrane segments spans residues G27–G47, L86–I106, I125–S145, L190–L210, and G211–G231.

This sequence belongs to the ATPase A chain family. In terms of assembly, F-type ATPases have 2 components, CF(1) - the catalytic core - and CF(0) - the membrane proton channel. CF(1) has five subunits: alpha(3), beta(3), gamma(1), delta(1), epsilon(1). CF(0) has four main subunits: a, b, b' and c.

It localises to the cellular thylakoid membrane. Functionally, key component of the proton channel; it plays a direct role in the translocation of protons across the membrane. The protein is ATP synthase subunit a of Synechococcus sp. (strain RCC307).